We begin with the raw amino-acid sequence, 252 residues long: Chitooligosaccharide deacetylase (252 aa).

Positions 61 and 125 each coordinate Mg(2+).

This sequence belongs to the YdjC deacetylase family. ChbG subfamily. Homodimer. Mg(2+) serves as cofactor.

It is found in the cytoplasm. It catalyses the reaction N,N'-diacetylchitobiose + H2O = N-acetyl-beta-D-glucosaminyl-(1-&gt;4)-D-glucosamine + acetate. The catalysed reaction is diacetylchitobiose-6'-phosphate + H2O = N'-monoacetylchitobiose-6'-phosphate + acetate. It participates in glycan degradation; chitin degradation. In terms of biological role, involved in the degradation of chitin. ChbG is essential for growth on the acetylated chitooligosaccharides chitobiose and chitotriose but is dispensable for growth on cellobiose and chitosan dimer, the deacetylated form of chitobiose. Deacetylation of chitobiose-6-P and chitotriose-6-P is necessary for both the activation of the chb promoter by the regulatory protein ChbR and the hydrolysis of phosphorylated beta-glucosides by the phospho-beta-glucosidase ChbF. Catalyzes the removal of only one acetyl group from chitobiose-6-P to yield monoacetylchitobiose-6-P, the inducer of ChbR and the substrate of ChbF. The sequence is that of Chitooligosaccharide deacetylase from Citrobacter koseri (strain ATCC BAA-895 / CDC 4225-83 / SGSC4696).